Here is a 445-residue protein sequence, read N- to C-terminus: Trigger factor (445 aa).

One can recognise a PPIase FKBP-type domain in the interval Gly172–Pro257.

The protein belongs to the FKBP-type PPIase family. Tig subfamily.

Its subcellular location is the cytoplasm. It carries out the reaction [protein]-peptidylproline (omega=180) = [protein]-peptidylproline (omega=0). Involved in protein export. Acts as a chaperone by maintaining the newly synthesized protein in an open conformation. Functions as a peptidyl-prolyl cis-trans isomerase. The protein is Trigger factor of Polynucleobacter necessarius subsp. necessarius (strain STIR1).